The chain runs to 243 residues: UPF0502 protein H16_B1091 (243 aa).

Residues 1 to 23 (MQSNHDSDASQAGDRPARPALRP) form a disordered region.

Belongs to the UPF0502 family.

This Cupriavidus necator (strain ATCC 17699 / DSM 428 / KCTC 22496 / NCIMB 10442 / H16 / Stanier 337) (Ralstonia eutropha) protein is UPF0502 protein H16_B1091.